The primary structure comprises 221 residues: MVTLTKEASQVRDALLARGLETPLRGEVLDNEVRKRLIAEHMTEIMTLLNLDLTDDSLAETPHRIAKMYVEEIFAGLDYANFPKITVIENKMKVDEMVTVRDITLTSTCEHHFVIIDGKATVSYIPKHCVIGLSKINRIVQFFAQRPQVQERLTQQIMLALQTLLGTNNVAVSIDAVHYCVKARGIRDATSTTTITSLGGLFKSSQNTRQEFLRAVTHYNG.

Residues Cys-109, His-112, and Cys-180 each contribute to the Zn(2+) site.

Belongs to the GTP cyclohydrolase I family. In terms of assembly, toroid-shaped homodecamer, composed of two pentamers of five dimers.

It catalyses the reaction GTP + H2O = 7,8-dihydroneopterin 3'-triphosphate + formate + H(+). It participates in cofactor biosynthesis; 7,8-dihydroneopterin triphosphate biosynthesis; 7,8-dihydroneopterin triphosphate from GTP: step 1/1. This Sodalis glossinidius (strain morsitans) protein is GTP cyclohydrolase 1.